Here is a 427-residue protein sequence, read N- to C-terminus: NAD kinase 2, mitochondrial (427 aa).

Residues 1-33 (MSLCLRLLCSVCGAAALRVPLGVSSLRALSGSA) constitute a mitochondrion transit peptide.

This sequence belongs to the NAD kinase family. Homodimer.

Its subcellular location is the mitochondrion. It carries out the reaction NAD(+) + ATP = ADP + NADP(+) + H(+). In terms of biological role, mitochondrial NAD(+) kinase that phosphorylates NAD(+) to yield NADP(+). Can use both ATP or inorganic polyphosphate as the phosphoryl donor. The polypeptide is NAD kinase 2, mitochondrial (nadk2) (Xenopus tropicalis (Western clawed frog)).